We begin with the raw amino-acid sequence, 261 residues long: Beta cell expansion factor A (261 aa).

The signal sequence occupies residues 1-21 (MNKRNWLLALSLSLAFSPCYA). Positions 99-261 (KTAKEARIAI…IDKDLTETSR (163 aa)) are SYLF domain.

The protein localises to the secreted. Its subcellular location is the host. In terms of biological role, stimulates the proliferation of insulin-producing beta cells during development in gnotobiotic zebrafish and mice. BefA is a microbiome-derived protein that traffics from the host intestinal lumen to the pancreas to act directly on pancreatic islets. In pancreas, interacts directly with host beta cells and elicits their proliferation via a mechanism of increasing membrane permeabilization. Can also permeabilize bacterial cell membranes, but does not show killing of target bacteria. This Aeromonas veronii protein is Beta cell expansion factor A.